Consider the following 409-residue polypeptide: Arginine deiminase (409 aa).

Residue cysteine 399 is the Amidino-cysteine intermediate of the active site.

The protein belongs to the arginine deiminase family.

The protein localises to the cytoplasm. It carries out the reaction L-arginine + H2O = L-citrulline + NH4(+). The protein operates within amino-acid degradation; L-arginine degradation via ADI pathway; carbamoyl phosphate from L-arginine: step 1/2. This Borrelia recurrentis (strain A1) protein is Arginine deiminase.